The primary structure comprises 191 residues: Retinin (191 aa).

The N-terminal stretch at 1–21 is a signal peptide; that stretch reads MSRLFLPVLAIVLVSIGASHT. The disordered stretch occupies residues 52–88; that stretch reads LADGSSGSVSSSAAQPEDQSQEEAEEQQVSSASSGSA. 2 stretches are compositionally biased toward low complexity: residues 55 to 69 and 78 to 88; these read GSSG…QPED and QQVSSASSGSA.

In terms of processing, phosphorylated. Specifically expressed in cornea (at protein level). Detected in retina and cortex.

The protein resides in the secreted. The polypeptide is Retinin (Drosophila melanogaster (Fruit fly)).